The primary structure comprises 97 residues: Apolipoprotein C-II (97 aa).

An N-terminal signal peptide occupies residues 1–22 (MGSRFFLALFLVILMLGNEVQG). Residues 63–71 (SMDEKLRDM) form a lipid binding region. Residues 75 to 97 (SSAAMSTYAGIFTDQLLTLLRGE) form a lipoprotein lipase cofactor region.

The protein belongs to the apolipoprotein C2 family. In terms of tissue distribution, adult and fetal liver, intestine and peritoneal macrophages.

Its subcellular location is the secreted. Functionally, component of chylomicrons, very low-density lipoproteins (VLDL), low-density lipoproteins (LDL), and high-density lipoproteins (HDL) in plasma. Plays an important role in lipoprotein metabolism as an activator of lipoprotein lipase. This Mus musculus (Mouse) protein is Apolipoprotein C-II (Apoc2).